The primary structure comprises 1023 residues: 2-oxoglutarate dehydrogenase complex component E1 (1023 aa).

A mitochondrion-targeting transit peptide spans 1-40 (MFHLRTCAAKLRPLTASQTVKTFSQNRPAAARTFQQIRCY). K74 bears the N6-succinyllysine mark. S100 is modified (phosphoserine). Ca(2+) contacts are provided by H143, D156, and D158. R312 is a thiamine diphosphate binding site. K401 carries the N6-acetyllysine modification. Thiamine diphosphate-binding residues include D411, N444, and I446. Residues D411, N444, and I446 each contribute to the Mg(2+) site. K534 participates in a covalent cross-link: Glycyl lysine isopeptide (Lys-Gly) (interchain with G-Cter in ubiquitin). K564 is modified (N6-succinyllysine). Position 676 (Q676) interacts with thiamine diphosphate. At K970 the chain carries N6-acetyllysine.

The protein belongs to the alpha-ketoglutarate dehydrogenase family. As to quaternary structure, homodimer. The 2-oxoglutarate dehydrogenase complex is composed of OGDH (2-oxoglutarate dehydrogenase; E1), DLST (dihydrolipoamide succinyltransferase; E2), DLD (dihydrolipoamide dehydrogenase; E3), and the assembly factor KGD4. It contains multiple copies of the three enzymatic components (E1, E2 and E3). In the nucleus, the 2-oxoglutarate dehydrogenase complex associates with KAT2A. Interacts with ABHD11; this interaction maintains the functional lipoylation of the 2-oxoglutarate dehydrogenase complex. Thiamine diphosphate serves as cofactor. Requires Mg(2+) as cofactor.

The protein resides in the mitochondrion. It localises to the nucleus. The enzyme catalyses N(6)-[(R)-lipoyl]-L-lysyl-[protein] + 2-oxoglutarate + H(+) = N(6)-[(R)-S(8)-succinyldihydrolipoyl]-L-lysyl-[protein] + CO2. Its activity is regulated as follows. Calcium ions and ADP stimulate, whereas ATP and NADH reduce catalytic activity. Functionally, 2-oxoglutarate dehydrogenase (E1o) component of the 2-oxoglutarate dehydrogenase complex (OGDHC). Participates in the first step, rate limiting for the overall conversion of 2-oxoglutarate to succinyl-CoA and CO(2) catalyzed by the whole OGDHC. Catalyzes the irreversible decarboxylation of 2-oxoglutarate (alpha-ketoglutarate) via the thiamine diphosphate (ThDP) cofactor and subsequent transfer of the decarboxylated acyl intermediate on an oxidized dihydrolipoyl group that is covalently amidated to the E2 enzyme (dihydrolipoyllysine-residue succinyltransferase or DLST). Plays a key role in the Krebs (citric acid) cycle, which is a common pathway for oxidation of fuel molecules, including carbohydrates, fatty acids, and amino acids. Can catalyze the decarboxylation of 2-oxoadipate in vitro, but at a much lower rate than 2-oxoglutarate. Mainly active in the mitochondrion. A fraction of the 2-oxoglutarate dehydrogenase complex also localizes in the nucleus and is required for lysine succinylation of histones: associates with KAT2A on chromatin and provides succinyl-CoA to histone succinyltransferase KAT2A. The sequence is that of 2-oxoglutarate dehydrogenase complex component E1 from Homo sapiens (Human).